A 472-amino-acid polypeptide reads, in one-letter code: Adenosylhomocysteinase (472 aa).

Residues threonine 64, aspartate 138, and glutamate 198 each contribute to the substrate site. Residue 199–201 (TTT) participates in NAD(+) binding. The substrate site is built by lysine 228 and aspartate 232. NAD(+) contacts are provided by residues asparagine 233, 262 to 267 (GFGDVG), glutamate 285, asparagine 320, 341 to 343 (IGH), and asparagine 386.

The protein belongs to the adenosylhomocysteinase family. NAD(+) serves as cofactor.

It is found in the cytoplasm. It carries out the reaction S-adenosyl-L-homocysteine + H2O = L-homocysteine + adenosine. It functions in the pathway amino-acid biosynthesis; L-homocysteine biosynthesis; L-homocysteine from S-adenosyl-L-homocysteine: step 1/1. In terms of biological role, may play a key role in the regulation of the intracellular concentration of adenosylhomocysteine. This chain is Adenosylhomocysteinase, found in Prochlorococcus marinus subsp. pastoris (strain CCMP1986 / NIES-2087 / MED4).